A 225-amino-acid chain; its full sequence is NAD(P)H-quinone oxidoreductase subunit K, chloroplastic (225 aa).

[4Fe-4S] cluster is bound by residues Cys43, Cys44, Cys108, and Cys139.

This sequence belongs to the complex I 20 kDa subunit family. In terms of assembly, NDH is composed of at least 16 different subunits, 5 of which are encoded in the nucleus. [4Fe-4S] cluster serves as cofactor.

The protein resides in the plastid. The protein localises to the chloroplast thylakoid membrane. It carries out the reaction a plastoquinone + NADH + (n+1) H(+)(in) = a plastoquinol + NAD(+) + n H(+)(out). The catalysed reaction is a plastoquinone + NADPH + (n+1) H(+)(in) = a plastoquinol + NADP(+) + n H(+)(out). In terms of biological role, NDH shuttles electrons from NAD(P)H:plastoquinone, via FMN and iron-sulfur (Fe-S) centers, to quinones in the photosynthetic chain and possibly in a chloroplast respiratory chain. The immediate electron acceptor for the enzyme in this species is believed to be plastoquinone. Couples the redox reaction to proton translocation, and thus conserves the redox energy in a proton gradient. This Agrostis stolonifera (Creeping bentgrass) protein is NAD(P)H-quinone oxidoreductase subunit K, chloroplastic.